The sequence spans 105 residues: UPF0145 protein OEOE_0637 (105 aa).

The protein belongs to the UPF0145 family.

In Oenococcus oeni (strain ATCC BAA-331 / PSU-1), this protein is UPF0145 protein OEOE_0637.